Consider the following 610-residue polypeptide: UvrABC system protein C (610 aa).

The GIY-YIG domain occupies 16–94; that stretch reads SQPGVYRMYD…IKLYQPRYNV (79 aa). The region spanning 204–239 is the UVR domain; the sequence is DQVLTQLIARMEKASQDLAFEEAARIRDQIQAVRRV.

Belongs to the UvrC family. Interacts with UvrB in an incision complex.

The protein localises to the cytoplasm. The UvrABC repair system catalyzes the recognition and processing of DNA lesions. UvrC both incises the 5' and 3' sides of the lesion. The N-terminal half is responsible for the 3' incision and the C-terminal half is responsible for the 5' incision. This is UvrABC system protein C from Salmonella paratyphi A (strain ATCC 9150 / SARB42).